Here is a 242-residue protein sequence, read N- to C-terminus: Biosynthetic peptidoglycan transglycosylase (242 aa).

A helical membrane pass occupies residues 19-39 (LMVVLAVFWGGGIALFSVAPV).

The protein belongs to the glycosyltransferase 51 family.

The protein localises to the cell inner membrane. The enzyme catalyses [GlcNAc-(1-&gt;4)-Mur2Ac(oyl-L-Ala-gamma-D-Glu-L-Lys-D-Ala-D-Ala)](n)-di-trans,octa-cis-undecaprenyl diphosphate + beta-D-GlcNAc-(1-&gt;4)-Mur2Ac(oyl-L-Ala-gamma-D-Glu-L-Lys-D-Ala-D-Ala)-di-trans,octa-cis-undecaprenyl diphosphate = [GlcNAc-(1-&gt;4)-Mur2Ac(oyl-L-Ala-gamma-D-Glu-L-Lys-D-Ala-D-Ala)](n+1)-di-trans,octa-cis-undecaprenyl diphosphate + di-trans,octa-cis-undecaprenyl diphosphate + H(+). The protein operates within cell wall biogenesis; peptidoglycan biosynthesis. Functionally, peptidoglycan polymerase that catalyzes glycan chain elongation from lipid-linked precursors. The chain is Biosynthetic peptidoglycan transglycosylase from Escherichia coli O17:K52:H18 (strain UMN026 / ExPEC).